Consider the following 332-residue polypeptide: Ribosomal RNA small subunit methyltransferase H (332 aa).

Residues 39 to 41 (GGY), Asp56, Phe83, Asp100, and Gln107 contribute to the S-adenosyl-L-methionine site.

Belongs to the methyltransferase superfamily. RsmH family.

Its subcellular location is the cytoplasm. It catalyses the reaction cytidine(1402) in 16S rRNA + S-adenosyl-L-methionine = N(4)-methylcytidine(1402) in 16S rRNA + S-adenosyl-L-homocysteine + H(+). Specifically methylates the N4 position of cytidine in position 1402 (C1402) of 16S rRNA. The chain is Ribosomal RNA small subunit methyltransferase H from Bartonella grahamii (strain as4aup).